The following is a 215-amino-acid chain: Cytochrome b6 (215 aa).

A helical membrane pass occupies residues 32–52 (IFYCLGGITLTCFLVQVASGF). Residue cysteine 35 participates in heme c binding. Histidine 86 and histidine 100 together coordinate heme b. A run of 3 helical transmembrane segments spans residues 90–110 (ASMM…TGGF), 116–136 (LTWV…VTGY), and 186–206 (LHTF…FLMI). Heme b is bound by residues histidine 187 and histidine 202.

Belongs to the cytochrome b family. PetB subfamily. The 4 large subunits of the cytochrome b6-f complex are cytochrome b6, subunit IV (17 kDa polypeptide, PetD), cytochrome f and the Rieske protein, while the 4 small subunits are PetG, PetL, PetM and PetN. The complex functions as a dimer. Requires heme b as cofactor. It depends on heme c as a cofactor.

The protein localises to the plastid. It localises to the chloroplast thylakoid membrane. Functionally, component of the cytochrome b6-f complex, which mediates electron transfer between photosystem II (PSII) and photosystem I (PSI), cyclic electron flow around PSI, and state transitions. The polypeptide is Cytochrome b6 (Anthoceros angustus (Hornwort)).